The chain runs to 141 residues: Large ribosomal subunit protein uL11 (141 aa).

This sequence belongs to the universal ribosomal protein uL11 family. As to quaternary structure, part of the ribosomal stalk of the 50S ribosomal subunit. Interacts with L10 and the large rRNA to form the base of the stalk. L10 forms an elongated spine to which L12 dimers bind in a sequential fashion forming a multimeric L10(L12)X complex. Post-translationally, one or more lysine residues are methylated.

Functionally, forms part of the ribosomal stalk which helps the ribosome interact with GTP-bound translation factors. The chain is Large ribosomal subunit protein uL11 from Fervidobacterium nodosum (strain ATCC 35602 / DSM 5306 / Rt17-B1).